Consider the following 438-residue polypeptide: UDP-N-acetylmuramoylalanine--D-glutamate ligase (438 aa).

112–118 contributes to the ATP binding site; the sequence is GSNGKST.

Belongs to the MurCDEF family.

The protein resides in the cytoplasm. It carries out the reaction UDP-N-acetyl-alpha-D-muramoyl-L-alanine + D-glutamate + ATP = UDP-N-acetyl-alpha-D-muramoyl-L-alanyl-D-glutamate + ADP + phosphate + H(+). The protein operates within cell wall biogenesis; peptidoglycan biosynthesis. Its function is as follows. Cell wall formation. Catalyzes the addition of glutamate to the nucleotide precursor UDP-N-acetylmuramoyl-L-alanine (UMA). The polypeptide is UDP-N-acetylmuramoylalanine--D-glutamate ligase (Sodalis glossinidius (strain morsitans)).